We begin with the raw amino-acid sequence, 132 residues long: L-ectoine synthase (132 aa).

Belongs to the ectoine synthase family.

It carries out the reaction (2S)-4-acetamido-2-aminobutanoate = L-ectoine + H2O. It participates in amine and polyamine biosynthesis; ectoine biosynthesis; L-ectoine from L-aspartate 4-semialdehyde: step 3/3. In terms of biological role, catalyzes the circularization of gamma-N-acetyl-alpha,gamma-diaminobutyric acid (ADABA) to ectoine (1,4,5,6-tetrahydro-2-methyl-4-pyrimidine carboxylic acid), which is an excellent osmoprotectant. This Teredinibacter turnerae (strain ATCC 39867 / T7901) protein is L-ectoine synthase.